The chain runs to 444 residues: Protein translocase subunit SecY (444 aa).

10 helical membrane-spanning segments follow: residues 24–44 (FFVIGALLVFRAGSFVPIPGI), 77–97 (ILALGIMPYISASIVVQLLTV), 123–143 (GTLVLATFQAIGIATGLPNMV), 153–173 (MFTLIATVSLVTGTMFLMWLG), 181–201 (IGNGISILIFAGIVAGLPKAI), 215–235 (VLLLLLIAVLAFAVIYFVVFM), 269–289 (MAGVIPAIFASSIILFPGTLA), 318–338 (YVMLYAAAIIFFCFFYTALVF), 376–396 (LAGALYITFICLIPEFMMVAW), and 400–420 (FYFGGTSLLIVVVVIMDFMAQ).

The protein belongs to the SecY/SEC61-alpha family. In terms of assembly, component of the Sec protein translocase complex. Heterotrimer consisting of SecY, SecE and SecG subunits. The heterotrimers can form oligomers, although 1 heterotrimer is thought to be able to translocate proteins. Interacts with the ribosome. Interacts with SecDF, and other proteins may be involved. Interacts with SecA.

The protein localises to the cell inner membrane. Functionally, the central subunit of the protein translocation channel SecYEG. Consists of two halves formed by TMs 1-5 and 6-10. These two domains form a lateral gate at the front which open onto the bilayer between TMs 2 and 7, and are clamped together by SecE at the back. The channel is closed by both a pore ring composed of hydrophobic SecY resides and a short helix (helix 2A) on the extracellular side of the membrane which forms a plug. The plug probably moves laterally to allow the channel to open. The ring and the pore may move independently. The polypeptide is Protein translocase subunit SecY (Vibrio cholerae serotype O1 (strain ATCC 39315 / El Tor Inaba N16961)).